We begin with the raw amino-acid sequence, 92 residues long: Small ribosomal subunit protein uS19 (92 aa).

It belongs to the universal ribosomal protein uS19 family.

Its function is as follows. Protein S19 forms a complex with S13 that binds strongly to the 16S ribosomal RNA. In Bartonella henselae (strain ATCC 49882 / DSM 28221 / CCUG 30454 / Houston 1) (Rochalimaea henselae), this protein is Small ribosomal subunit protein uS19.